The chain runs to 184 residues: Thymidine kinase (184 aa).

Residues 9–16 (AAMNSGKS) and 82–85 (DEAQ) each bind ATP. The Proton acceptor role is filled by E83. The Zn(2+) site is built by C140, C142, C177, and C180.

This sequence belongs to the thymidine kinase family. Homotetramer.

It is found in the cytoplasm. It carries out the reaction thymidine + ATP = dTMP + ADP + H(+). The polypeptide is Thymidine kinase (Chromobacterium violaceum (strain ATCC 12472 / DSM 30191 / JCM 1249 / CCUG 213 / NBRC 12614 / NCIMB 9131 / NCTC 9757 / MK)).